A 263-amino-acid chain; its full sequence is 3-methyl-2-oxobutanoate hydroxymethyltransferase (263 aa).

Mg(2+) contacts are provided by Asp-45 and Asp-84. 3-methyl-2-oxobutanoate is bound by residues 45–46 (DS), Asp-84, and Lys-113. A Mg(2+)-binding site is contributed by Glu-115. Residue Glu-182 is the Proton acceptor of the active site.

Belongs to the PanB family. As to quaternary structure, homodecamer; pentamer of dimers. The cofactor is Mg(2+).

It is found in the cytoplasm. The catalysed reaction is 3-methyl-2-oxobutanoate + (6R)-5,10-methylene-5,6,7,8-tetrahydrofolate + H2O = 2-dehydropantoate + (6S)-5,6,7,8-tetrahydrofolate. Its pathway is cofactor biosynthesis; coenzyme A biosynthesis. In terms of biological role, catalyzes the reversible reaction in which hydroxymethyl group from 5,10-methylenetetrahydrofolate is transferred onto alpha-ketoisovalerate to form ketopantoate. The protein is 3-methyl-2-oxobutanoate hydroxymethyltransferase of Ignicoccus hospitalis (strain KIN4/I / DSM 18386 / JCM 14125).